The chain runs to 267 residues: uncharacterized protein (267 aa).

The segment at 72–267 (LTENNNNNNT…EEKKKKKKKK (196 aa)) is disordered. Low complexity predominate over residues 122–145 (DSVSSSTTTTIITNNKKINNNNNN). Over residues 159–175 (ENEKSVQKSKKEKESPK) the composition is skewed to basic and acidic residues. Positions 194–218 (SESSSSSSSSSSSESSSSESESSSS) are enriched in low complexity.

This is an uncharacterized protein from Dictyostelium discoideum (Social amoeba).